A 537-amino-acid chain; its full sequence is Chaperonin GroEL (537 aa).

ATP is bound by residues 29–32 (TLGP), 86–90 (DGTTT), Gly413, and Asp492.

This sequence belongs to the chaperonin (HSP60) family. In terms of assembly, forms a cylinder of 14 subunits composed of two heptameric rings stacked back-to-back. Interacts with the co-chaperonin GroES.

The protein localises to the cytoplasm. The catalysed reaction is ATP + H2O + a folded polypeptide = ADP + phosphate + an unfolded polypeptide.. Its function is as follows. Together with its co-chaperonin GroES, plays an essential role in assisting protein folding. The GroEL-GroES system forms a nano-cage that allows encapsulation of the non-native substrate proteins and provides a physical environment optimized to promote and accelerate protein folding. The sequence is that of Chaperonin GroEL from Dehalococcoides mccartyi (strain CBDB1).